Consider the following 1444-residue polypeptide: Probable chitinase LysM18 (1444 aa).

LysM domains are found at residues 256 to 302 and 321 to 369; these read STVQ…HFCC and TTYT…IICL. Residues 382–450 enclose the Chitin-binding type-1 domain; the sequence is NAECGPQVPG…TNGCISNCGT (69 aa). 4 cysteine pairs are disulfide-bonded: cysteine 385-cysteine 413, cysteine 407-cysteine 419, cysteine 412-cysteine 426, and cysteine 444-cysteine 448. The GH18 domain occupies 461-831; the sequence is YRKVGFYEGF…STSWTKFTSD (371 aa). Catalysis depends on glutamate 582, which acts as the Proton donor. Tyrosine 583 and tryptophan 808 together coordinate chitin.

Belongs to the glycosyl hydrolase 18 family. Chitinase class V subfamily.

The catalysed reaction is Random endo-hydrolysis of N-acetyl-beta-D-glucosaminide (1-&gt;4)-beta-linkages in chitin and chitodextrins.. Functionally, probable chitinase involved in the degradation of chitin, a component of the cell walls of fungi and exoskeletal elements of some animals (including worms and arthropods). Might be involved in manipulation of host defenses for successful infection. The protein is Probable chitinase LysM18 of Penicillium expansum (Blue mold rot fungus).